The chain runs to 542 residues: CTP synthase (542 aa).

The amidoligase domain stretch occupies residues 1 to 265; it reads MTRYIFVTGG…DDFVVERFGL (265 aa). Ser-13 contacts CTP. A UTP-binding site is contributed by Ser-13. ATP is bound by residues 14–19 and Asp-71; that span reads SLGKGI. Residues Asp-71 and Glu-139 each coordinate Mg(2+). CTP-binding positions include 146-148, 186-191, and Lys-222; these read DIE and KTKPTQ. UTP-binding positions include 186–191 and Lys-222; that span reads KTKPTQ. One can recognise a Glutamine amidotransferase type-1 domain in the interval 290–541; that stretch reads TIAMVGKYME…VKAALAQKNK (252 aa). Gly-351 contributes to the L-glutamine binding site. Catalysis depends on Cys-378, which acts as the Nucleophile; for glutamine hydrolysis. Residues 379–382, Glu-402, and Arg-469 contribute to the L-glutamine site; that span reads LGMQ. Residues His-514 and Glu-516 contribute to the active site.

It belongs to the CTP synthase family. In terms of assembly, homotetramer.

The enzyme catalyses UTP + L-glutamine + ATP + H2O = CTP + L-glutamate + ADP + phosphate + 2 H(+). It catalyses the reaction L-glutamine + H2O = L-glutamate + NH4(+). It carries out the reaction UTP + NH4(+) + ATP = CTP + ADP + phosphate + 2 H(+). The protein operates within pyrimidine metabolism; CTP biosynthesis via de novo pathway; CTP from UDP: step 2/2. Allosterically activated by GTP, when glutamine is the substrate; GTP has no effect on the reaction when ammonia is the substrate. The allosteric effector GTP functions by stabilizing the protein conformation that binds the tetrahedral intermediate(s) formed during glutamine hydrolysis. Inhibited by the product CTP, via allosteric rather than competitive inhibition. Its function is as follows. Catalyzes the ATP-dependent amination of UTP to CTP with either L-glutamine or ammonia as the source of nitrogen. Regulates intracellular CTP levels through interactions with the four ribonucleotide triphosphates. The sequence is that of CTP synthase from Pseudomonas putida (strain GB-1).